Reading from the N-terminus, the 163-residue chain is Nucleotide-binding protein ROP_16630 (163 aa).

It belongs to the YajQ family.

Functionally, nucleotide-binding protein. This chain is Nucleotide-binding protein ROP_16630, found in Rhodococcus opacus (strain B4).